The following is a 270-amino-acid chain: Aliphatic sulfonates import ATP-binding protein SsuB (270 aa).

One can recognise an ABC transporter domain in the interval 17-238; the sequence is LASSGLRKTF…ARGSHRLAAL (222 aa). Position 49-56 (49-56) interacts with ATP; sequence GRSGCGKS. A disordered region spans residues 249–270; that stretch reads APGAAPEPDPVAPLPTQLRWAH.

The protein belongs to the ABC transporter superfamily. Aliphatic sulfonates importer (TC 3.A.1.17.2) family. As to quaternary structure, the complex is composed of two ATP-binding proteins (SsuB), two transmembrane proteins (SsuC) and a solute-binding protein (SsuA).

It is found in the cell inner membrane. It carries out the reaction ATP + H2O + aliphatic sulfonate-[sulfonate-binding protein]Side 1 = ADP + phosphate + aliphatic sulfonateSide 2 + [sulfonate-binding protein]Side 1.. Part of the ABC transporter complex SsuABC involved in aliphatic sulfonates import. Responsible for energy coupling to the transport system. In Pseudomonas putida (Arthrobacter siderocapsulatus), this protein is Aliphatic sulfonates import ATP-binding protein SsuB.